We begin with the raw amino-acid sequence, 107 residues long: Thiosulfate sulfurtransferase GlpE (107 aa).

The region spanning 19-107 (KDHNARMVDI…WNKAGLPVEK (89 aa)) is the Rhodanese domain. The Cysteine persulfide intermediate role is filled by cysteine 67.

The protein belongs to the GlpE family.

Its subcellular location is the cytoplasm. It catalyses the reaction thiosulfate + hydrogen cyanide = thiocyanate + sulfite + 2 H(+). The enzyme catalyses thiosulfate + [thioredoxin]-dithiol = [thioredoxin]-disulfide + hydrogen sulfide + sulfite + 2 H(+). Its function is as follows. Transferase that catalyzes the transfer of sulfur from thiosulfate to thiophilic acceptors such as cyanide or dithiols. May function in a CysM-independent thiosulfate assimilation pathway by catalyzing the conversion of thiosulfate to sulfite, which can then be used for L-cysteine biosynthesis. The sequence is that of Thiosulfate sulfurtransferase GlpE from Aliivibrio salmonicida (strain LFI1238) (Vibrio salmonicida (strain LFI1238)).